Here is a 457-residue protein sequence, read N- to C-terminus: Streptogrisin-C (457 aa).

A signal peptide (tat-type signal) is located at residues 1–34 (MERTTLRRRALVAGTATVAVGALALAGLTGVASA). Positions 35–202 (DPAATAAPPV…ARSAEQPRAL (168 aa)) are excised as a propeptide. A catalytic region spans residues 203–393 (ADIRGGDAYY…QAYGLTLVTS (191 aa)). A disulfide bond links Cys219 and Cys239. Catalysis depends on charge relay system residues His238 and Asp266. 2 disulfides stabilise this stretch: Cys305–Cys315 and Cys341–Cys368. The active-site Charge relay system is Ser347. Residues 393–412 (SGGGTPTDPPTTPPTDSPGG) form a disordered region. The segment at 394–413 (GGGTPTDPPTTPPTDSPGGT) is linker. Residues 399–408 (TDPPTTPPTD) are compositionally biased toward pro residues. The 43-residue stretch at 415 to 457 (AVGTAYAAGATVTYGGATYRCLQAHTAQPGWTPADVPALWQRV) folds into the Chitin-binding type-3 domain.

Belongs to the peptidase S1 family. As to quaternary structure, monomer. In terms of processing, predicted to be exported by the Tat system. The position of the signal peptide cleavage has not been experimentally proven.

Functionally, hydrolysis of proteins with specificity similar to chymotrypsin. May be specialized for the degradation of chitin-linked proteins. Has a primary specificity for large aliphatic or aromatic amino acids. The sequence is that of Streptogrisin-C (sprC) from Streptomyces griseus.